The chain runs to 583 residues: Threonine--tRNA ligase (583 aa).

Residues 185–478 are catalytic; it reads DHRKLGRELN…LVEHYGGAFP (294 aa). Positions 278, 329, and 455 each coordinate Zn(2+).

It belongs to the class-II aminoacyl-tRNA synthetase family. In terms of assembly, homodimer. Requires Zn(2+) as cofactor.

It is found in the cytoplasm. The catalysed reaction is tRNA(Thr) + L-threonine + ATP = L-threonyl-tRNA(Thr) + AMP + diphosphate + H(+). Catalyzes the attachment of threonine to tRNA(Thr) in a two-step reaction: L-threonine is first activated by ATP to form Thr-AMP and then transferred to the acceptor end of tRNA(Thr). Also edits incorrectly charged L-seryl-tRNA(Thr). This is Threonine--tRNA ligase from Borrelia duttonii (strain Ly).